The following is a 126-amino-acid chain: Aspartate 1-decarboxylase (126 aa).

S25 functions as the Schiff-base intermediate with substrate; via pyruvic acid in the catalytic mechanism. Position 25 is a pyruvic acid (Ser) (S25). Position 57 (T57) interacts with substrate. Y58 functions as the Proton donor in the catalytic mechanism. 72–74 (GAA) contacts substrate.

This sequence belongs to the PanD family. As to quaternary structure, heterooctamer of four alpha and four beta subunits. The cofactor is pyruvate. Post-translationally, is synthesized initially as an inactive proenzyme, which is activated by self-cleavage at a specific serine bond to produce a beta-subunit with a hydroxyl group at its C-terminus and an alpha-subunit with a pyruvoyl group at its N-terminus.

Its subcellular location is the cytoplasm. It catalyses the reaction L-aspartate + H(+) = beta-alanine + CO2. It participates in cofactor biosynthesis; (R)-pantothenate biosynthesis; beta-alanine from L-aspartate: step 1/1. Catalyzes the pyruvoyl-dependent decarboxylation of aspartate to produce beta-alanine. The chain is Aspartate 1-decarboxylase from Campylobacter jejuni subsp. jejuni serotype O:23/36 (strain 81-176).